A 217-amino-acid polypeptide reads, in one-letter code: 3,4-dihydroxy-2-butanone 4-phosphate synthase (217 aa).

Residues 37–38 (RE), Asp-42, 150–154 (RRGHT), and Glu-174 contribute to the D-ribulose 5-phosphate site. Position 38 (Glu-38) interacts with Mg(2+). A Mg(2+)-binding site is contributed by His-153.

Belongs to the DHBP synthase family. In terms of assembly, homodimer. It depends on Mg(2+) as a cofactor. Mn(2+) serves as cofactor.

It carries out the reaction D-ribulose 5-phosphate = (2S)-2-hydroxy-3-oxobutyl phosphate + formate + H(+). It functions in the pathway cofactor biosynthesis; riboflavin biosynthesis; 2-hydroxy-3-oxobutyl phosphate from D-ribulose 5-phosphate: step 1/1. In terms of biological role, catalyzes the conversion of D-ribulose 5-phosphate to formate and 3,4-dihydroxy-2-butanone 4-phosphate. This chain is 3,4-dihydroxy-2-butanone 4-phosphate synthase, found in Yersinia pseudotuberculosis serotype O:1b (strain IP 31758).